Reading from the N-terminus, the 165-residue chain is Endoribonuclease YbeY (165 aa).

Residues H130, H134, and H140 each coordinate Zn(2+).

Belongs to the endoribonuclease YbeY family. It depends on Zn(2+) as a cofactor.

The protein localises to the cytoplasm. Single strand-specific metallo-endoribonuclease involved in late-stage 70S ribosome quality control and in maturation of the 3' terminus of the 16S rRNA. This is Endoribonuclease YbeY from Streptococcus thermophilus (strain CNRZ 1066).